The chain runs to 406 residues: Mitochondrial ribosome-associated GTPase 2 (406 aa).

The segment at 15-406 (FEGVGHWALS…LGQGRQPLRW (392 aa)) is localized in the mitochondria. Residues 30–406 (KPSRLLPQQA…LGQGRQPLRW (377 aa)) are not localized in the mitochondria. Positions 70 to 224 (RYFVDYRRVL…RVLHLELKTV (155 aa)) constitute an Obg domain. In terms of domain architecture, OBG-type G spans 225-390 (AHAGMVGFPN…LLLHLKVLYD (166 aa)). GTP-binding positions include 231-238 (GFPNAGKS), 256-260 (FTTLK), 278-281 (DIPG), 345-348 (NKID), and 371-373 (SAL). Mg(2+) contacts are provided by Ser-238 and Thr-258.

It belongs to the TRAFAC class OBG-HflX-like GTPase superfamily. OBG GTPase family. As to quaternary structure, associates with the mitochondrial ribosome large subunit; the association occurs in a GTP-dependent manner. Mg(2+) is required as a cofactor.

It localises to the mitochondrion. Its subcellular location is the mitochondrion inner membrane. In terms of biological role, plays a role in the regulation of the mitochondrial ribosome assembly and of translational activity. Displays GTPase activity. Involved in the ribosome maturation process. This is Mitochondrial ribosome-associated GTPase 2 (MTG2) from Pongo abelii (Sumatran orangutan).